Consider the following 360-residue polypeptide: Plastid lipid-associated protein 3, chloroplastic (360 aa).

The segment covering 1–37 (MATLFTVTTTSRPFPANPSKTFSPSISLKPNALSFSL) has biased composition (polar residues). Residues 1-52 (MATLFTVTTTSRPFPANPSKTFSPSISLKPNALSFSLTHHRPPRPLRFSKIR) constitute a chloroplast transit peptide. Residues 1–130 (MATLFTVTTT…EWEEREADDG (130 aa)) are disordered. The span at 38–50 (THHRPPRPLRFSK) shows a compositional bias: basic residues. A compositionally biased stretch (low complexity) spans 53 to 68 (SSLPSESDSEPEGGYS). Over residues 117-127 (TNEDEWEEREA) the composition is skewed to acidic residues.

Belongs to the PAP/fibrillin family. As to expression, ubiquitous expression among various organs, but only at a very low level.

Its subcellular location is the plastid. The protein localises to the chloroplast. The polypeptide is Plastid lipid-associated protein 3, chloroplastic (PAP3) (Brassica campestris (Field mustard)).